The primary structure comprises 482 residues: tRNA sulfurtransferase (482 aa).

A THUMP domain is found at Leu-61–Arg-165. Residues Leu-183–Ile-184, Lys-265, Gly-287, and Gln-296 each bind ATP. An intrachain disulfide couples Cys-344 to Cys-456. The 79-residue stretch at Phe-404 to Pro-482 folds into the Rhodanese domain. Cys-456 (cysteine persulfide intermediate) is an active-site residue.

It belongs to the ThiI family.

It is found in the cytoplasm. It carries out the reaction [ThiI sulfur-carrier protein]-S-sulfanyl-L-cysteine + a uridine in tRNA + 2 reduced [2Fe-2S]-[ferredoxin] + ATP + H(+) = [ThiI sulfur-carrier protein]-L-cysteine + a 4-thiouridine in tRNA + 2 oxidized [2Fe-2S]-[ferredoxin] + AMP + diphosphate. It catalyses the reaction [ThiS sulfur-carrier protein]-C-terminal Gly-Gly-AMP + S-sulfanyl-L-cysteinyl-[cysteine desulfurase] + AH2 = [ThiS sulfur-carrier protein]-C-terminal-Gly-aminoethanethioate + L-cysteinyl-[cysteine desulfurase] + A + AMP + 2 H(+). The protein operates within cofactor biosynthesis; thiamine diphosphate biosynthesis. In terms of biological role, catalyzes the ATP-dependent transfer of a sulfur to tRNA to produce 4-thiouridine in position 8 of tRNAs, which functions as a near-UV photosensor. Also catalyzes the transfer of sulfur to the sulfur carrier protein ThiS, forming ThiS-thiocarboxylate. This is a step in the synthesis of thiazole, in the thiamine biosynthesis pathway. The sulfur is donated as persulfide by IscS. The polypeptide is tRNA sulfurtransferase (Escherichia coli (strain ATCC 8739 / DSM 1576 / NBRC 3972 / NCIMB 8545 / WDCM 00012 / Crooks)).